A 348-amino-acid chain; its full sequence is MNDRQAALDQALKQIEKQFGKGSIMKLGEHSDQNISTISSGSLALDIALGVGGYPRGRIIEVYGPESSGKTTVALHAIAEVQAQGGTAAFIDAEHALDPAYAKNLGVNIDELLLSQPDTGEQALEIAEALVRSGAVDMLVIDSVAALVPRAEIEGEMGDAHVGLQARLMSQALRKLSGVINKSKTIAIFINQIREKVGVMFGNPEITPGGRALKFYSTVRLEVRRAEQLKQGTDVMGNKTKIKVVKNKVAPPFRIAEVDIMYGEGISREGELVDMAAEVDVINKSGSWYSYKEERIGQGRENAKQYLKEHTDIRDEISKRVREEYEIDGSNKEPLDEGEETLSLLDDE.

Position 64–71 (G64–T71) interacts with ATP. Residues Y325–L335 show a composition bias toward basic and acidic residues. The segment at Y325–E348 is disordered. Over residues D336–E348 the composition is skewed to acidic residues.

This sequence belongs to the RecA family.

Its subcellular location is the cytoplasm. Its function is as follows. Can catalyze the hydrolysis of ATP in the presence of single-stranded DNA, the ATP-dependent uptake of single-stranded DNA by duplex DNA, and the ATP-dependent hybridization of homologous single-stranded DNAs. It interacts with LexA causing its activation and leading to its autocatalytic cleavage. The chain is Protein RecA from Listeria monocytogenes serotype 4b (strain CLIP80459).